The following is a 686-amino-acid chain: tRNA wybutosine-synthesizing protein 4 (686 aa).

Residues 1–22 are disordered; it reads MGPRSRQRRTGTVQSTNDSSSL. Over residues 10–22 the composition is skewed to polar residues; sequence TGTVQSTNDSSSL. Residues arginine 59, glycine 89, aspartate 114, 161–162, and glutamate 188 contribute to the S-adenosyl-L-methionine site; that span reads DL.

It belongs to the methyltransferase superfamily. LCMT family. As to quaternary structure, interacts with RNF144B/IBRDC2.

The catalysed reaction is 7-[(3S)-3-amino-3-carboxypropyl]wyosine(37) in tRNA(Phe) + S-adenosyl-L-methionine = 7-[(3S)-(3-amino-3-methoxycarbonyl)propyl]wyosine(37) in tRNA(Phe) + S-adenosyl-L-homocysteine. The enzyme catalyses 7-[(3S)-(3-amino-3-methoxycarbonyl)propyl]wyosine(37) in tRNA(Phe) + S-adenosyl-L-methionine + CO2 = wybutosine(37) in tRNA(Phe) + S-adenosyl-L-homocysteine + 2 H(+). Its pathway is tRNA modification; wybutosine-tRNA(Phe) biosynthesis. Probable S-adenosyl-L-methionine-dependent methyltransferase that acts as a component of the wybutosine biosynthesis pathway. Wybutosine is a hyper modified guanosine with a tricyclic base found at the 3'-position adjacent to the anticodon of eukaryotic phenylalanine tRNA. May methylate the carboxyl group of leucine residues to form alpha-leucine ester residues. This chain is tRNA wybutosine-synthesizing protein 4 (Lcmt2), found in Rattus norvegicus (Rat).